Here is a 240-residue protein sequence, read N- to C-terminus: Proteasome subunit alpha (240 aa).

The protein belongs to the peptidase T1A family. In terms of assembly, the 20S proteasome core is composed of 14 alpha and 14 beta subunits that assemble into four stacked heptameric rings, resulting in a barrel-shaped structure. The two inner rings, each composed of seven catalytic beta subunits, are sandwiched by two outer rings, each composed of seven alpha subunits. The catalytic chamber with the active sites is on the inside of the barrel. Has a gated structure, the ends of the cylinder being occluded by the N-termini of the alpha-subunits. Is capped at one or both ends by the proteasome regulatory ATPase, PAN.

The protein resides in the cytoplasm. The formation of the proteasomal ATPase PAN-20S proteasome complex, via the docking of the C-termini of PAN into the intersubunit pockets in the alpha-rings, triggers opening of the gate for substrate entry. Interconversion between the open-gate and close-gate conformations leads to a dynamic regulation of the 20S proteasome proteolysis activity. In terms of biological role, component of the proteasome core, a large protease complex with broad specificity involved in protein degradation. This chain is Proteasome subunit alpha, found in Methanoregula boonei (strain DSM 21154 / JCM 14090 / 6A8).